The chain runs to 301 residues: Protoheme IX farnesyltransferase (301 aa).

A run of 8 helical transmembrane segments spans residues 25 to 45 (VTQL…PGMV), 47 to 67 (WTPL…AFAI), 97 to 117 (ILLF…TFAN), 119 to 139 (LTMW…TLLL), 147 to 167 (IVIG…AVTG), 173 to 193 (AWIL…ALAL), 235 to 255 (FISG…GALF), and 279 to 299 (IVYL…RVLI).

It belongs to the UbiA prenyltransferase family. Protoheme IX farnesyltransferase subfamily.

It is found in the cell inner membrane. The enzyme catalyses heme b + (2E,6E)-farnesyl diphosphate + H2O = Fe(II)-heme o + diphosphate. Its pathway is porphyrin-containing compound metabolism; heme O biosynthesis; heme O from protoheme: step 1/1. In terms of biological role, converts heme B (protoheme IX) to heme O by substitution of the vinyl group on carbon 2 of heme B porphyrin ring with a hydroxyethyl farnesyl side group. The sequence is that of Protoheme IX farnesyltransferase from Paraburkholderia xenovorans (strain LB400).